The following is a 204-amino-acid chain: Inactive ribonuclease-like protein 9 (204 aa).

An N-terminal signal peptide occupies residues 1–26; it reads MMRTLITIHPLPLLLLLQQLLQPVQF. Disulfide bonds link C97–C152, C115–C167, and C122–C129. N130 and N142 each carry an N-linked (GlcNAc...) asparagine glycan.

Belongs to the pancreatic ribonuclease family.

The protein localises to the secreted. Functionally, does not exhibit any ribonuclease activity. The chain is Inactive ribonuclease-like protein 9 (RNASE9) from Symphalangus syndactylus (Siamang).